The primary structure comprises 838 residues: Multiphosphoryl transfer protein (838 aa).

One can recognise a PTS EIIA type-2 domain in the interval 7-147 (APVTPDLVRL…AVIVAALTGD (141 aa)). His67 functions as the Tele-phosphohistidine intermediate; for EIIA activity in the catalytic mechanism. A Phosphohistidine; by HPr modification is found at His67. The 93-residue stretch at 161-253 (AERFEWTIAY…LTAQEKADAE (93 aa)) folds into the HPr domain. His175 serves as the catalytic Pros-phosphohistidine intermediate; for HPr activity. His175 carries the post-translational modification Phosphohistidine; by EI. Residues 274–838 (AIVGIGASPG…ALEAQREGQA (565 aa)) are PTS EI. The active-site Tele-phosphohistidine intermediate; for PTS EI activity is His460. His460 is modified (phosphohistidine; by autocatalysis). Residues Arg567 and Arg603 each contribute to the phosphoenolpyruvate site. Glu697 and Asp721 together coordinate Mg(2+). Residues 720 to 721 (ND) and Arg731 each bind phosphoenolpyruvate. Cys768 acts as the Proton donor in catalysis.

Belongs to the PEP-utilizing enzyme family. It depends on Mg(2+) as a cofactor.

It is found in the cytoplasm. It catalyses the reaction L-histidyl-[protein] + phosphoenolpyruvate = N(pros)-phospho-L-histidyl-[protein] + pyruvate. Functionally, the phosphoenolpyruvate-dependent sugar phosphotransferase system (sugar PTS), a major carbohydrate active transport system, catalyzes the phosphorylation of incoming sugar substrates concomitantly with their translocation across the cell membrane. The enzyme II FruAB PTS system is involved in fructose transport. The chain is Multiphosphoryl transfer protein from Xanthomonas campestris pv. campestris (strain ATCC 33913 / DSM 3586 / NCPPB 528 / LMG 568 / P 25).